A 264-amino-acid chain; its full sequence is Small ribosomal subunit protein uS2 (264 aa).

The disordered stretch occupies residues 233–264 (AQTQAGGKAEQEAPATEEAADAQTEEAATPAE).

This sequence belongs to the universal ribosomal protein uS2 family.

The protein is Small ribosomal subunit protein uS2 of Psychrobacter arcticus (strain DSM 17307 / VKM B-2377 / 273-4).